Reading from the N-terminus, the 159-residue chain is Phosphopantetheine adenylyltransferase (159 aa).

Residue serine 9 participates in substrate binding. Residues 9-10 and histidine 17 each bind ATP; that span reads SF. Residues lysine 41, leucine 73, and lysine 87 each contribute to the substrate site. ATP is bound by residues 88 to 90, glutamate 98, and 123 to 129; these read GLR and NIHISSS.

This sequence belongs to the bacterial CoaD family. In terms of assembly, homohexamer. Requires Mg(2+) as cofactor.

The protein resides in the cytoplasm. It catalyses the reaction (R)-4'-phosphopantetheine + ATP + H(+) = 3'-dephospho-CoA + diphosphate. It participates in cofactor biosynthesis; coenzyme A biosynthesis; CoA from (R)-pantothenate: step 4/5. Its function is as follows. Reversibly transfers an adenylyl group from ATP to 4'-phosphopantetheine, yielding dephospho-CoA (dPCoA) and pyrophosphate. This Clostridium beijerinckii (strain ATCC 51743 / NCIMB 8052) (Clostridium acetobutylicum) protein is Phosphopantetheine adenylyltransferase.